The following is a 165-amino-acid chain: ATP synthase subunit b (165 aa).

Residues 7-27 (STTIGDIIIVSGSVLLLFILI) form a helical membrane-spanning segment.

It belongs to the ATPase B chain family. As to quaternary structure, F-type ATPases have 2 components, F(1) - the catalytic core - and F(0) - the membrane proton channel. F(1) has five subunits: alpha(3), beta(3), gamma(1), delta(1), epsilon(1). F(0) has three main subunits: a(1), b(2) and c(10-14). The alpha and beta chains form an alternating ring which encloses part of the gamma chain. F(1) is attached to F(0) by a central stalk formed by the gamma and epsilon chains, while a peripheral stalk is formed by the delta and b chains.

The protein localises to the cell membrane. Functionally, f(1)F(0) ATP synthase produces ATP from ADP in the presence of a proton or sodium gradient. F-type ATPases consist of two structural domains, F(1) containing the extramembraneous catalytic core and F(0) containing the membrane proton channel, linked together by a central stalk and a peripheral stalk. During catalysis, ATP synthesis in the catalytic domain of F(1) is coupled via a rotary mechanism of the central stalk subunits to proton translocation. Its function is as follows. Component of the F(0) channel, it forms part of the peripheral stalk, linking F(1) to F(0). The polypeptide is ATP synthase subunit b (Streptococcus agalactiae serotype Ia (strain ATCC 27591 / A909 / CDC SS700)).